We begin with the raw amino-acid sequence, 439 residues long: Putative FBD-associated F-box protein At1g05080 (439 aa).

In terms of domain architecture, F-box spans 12–58 (EDRISVLPEDLLVVILDLLPTKDVVATMILSKRWLSIWTMVRTLEYT). Positions 360–410 (SWKQPSHVPECLSSQLEIFEWRDYGDRIIEEEFLTYVLANSKRLKTATISL) constitute an FBD domain.

The chain is Putative FBD-associated F-box protein At1g05080 from Arabidopsis thaliana (Mouse-ear cress).